We begin with the raw amino-acid sequence, 188 residues long: Elongation factor P (188 aa).

This sequence belongs to the elongation factor P family.

It is found in the cytoplasm. The protein operates within protein biosynthesis; polypeptide chain elongation. Involved in peptide bond synthesis. Stimulates efficient translation and peptide-bond synthesis on native or reconstituted 70S ribosomes in vitro. Probably functions indirectly by altering the affinity of the ribosome for aminoacyl-tRNA, thus increasing their reactivity as acceptors for peptidyl transferase. The chain is Elongation factor P from Phocaeicola vulgatus (strain ATCC 8482 / DSM 1447 / JCM 5826 / CCUG 4940 / NBRC 14291 / NCTC 11154) (Bacteroides vulgatus).